A 630-amino-acid polypeptide reads, in one-letter code: MIFPDKFDVIVIGGGHAGTEACLAAARMGCKTLLLSHNIETLGQMSCNPAIGGIGKSHLVKEIDALGGAMAKATDKGGIQFRVLNNRKGPAVRATRAQADRVLYKAAVREILENQPNLTIFQQAADDLVVEGETVRGVVTQMGVTFLAPTVVLTAGTFLGGRIHIGLENHSGGRAGDPPSIALADRLRELPLRVDRLKTGTPPRIDARSVNFDGLDEQWGDKPTPVMSFLGSQDDHPRQTCCWVTHTNERTHDIIRSGFDRSPMFTGVIEGVGPRYCPSIEDKVNRFADKNSHQIFIEPEGLTTHELYPNGISTSLPFDIQLALVRSIKGFENAHIVRPGYAIEYDFFNPQDLQYSLETKVISGLFFAGQINGTTGYEEAGAQGLLAGANAALKAQGKEPWCPERDQAYMGVLVDDLITMGTREPYRMFTSRAEYRLLLREDNADLRLTEKGRELGLVDDIRWAAFCEKREQIEQETQRMRSTWVQANSAEALQLADKLTAPLNREYSLLDLLKRPELTYADLGHLKGEAVANVQVAEQVEITAKYAGYIDRQQDEIARLRQHENTPIPASFDYDSVEGLSNELKQKLNEARPDNIARASRIPGITPAAISLLVIYLKKRGMLRKVAAES.

An FAD-binding site is contributed by 13 to 18; it reads GGGHAG. NAD(+) is bound at residue 273-287; sequence GPRYCPSIEDKVNRF.

It belongs to the MnmG family. Homodimer. Heterotetramer of two MnmE and two MnmG subunits. The cofactor is FAD.

Its subcellular location is the cytoplasm. In terms of biological role, NAD-binding protein involved in the addition of a carboxymethylaminomethyl (cmnm) group at the wobble position (U34) of certain tRNAs, forming tRNA-cmnm(5)s(2)U34. This chain is tRNA uridine 5-carboxymethylaminomethyl modification enzyme MnmG, found in Teredinibacter turnerae (strain ATCC 39867 / T7901).